The following is a 570-amino-acid chain: La-related protein 7 (570 aa).

Residue M1 is modified to N-acetylmethionine. Over residues 1–16 the composition is skewed to basic and acidic residues; sequence METENQKTMEESTKRK. 2 disordered regions span residues 1-24 and 180-364; these read METE…KRSR and LNNP…ERHK. The 95-residue stretch at 22-116 folds into the HTH La-type RNA-binding domain; sequence RSRVKQVLAD…KPLGERPKDE (95 aa). An RRM domain is found at 119–197; it reads RTVYVELLPK…PRKPGIFPKT (79 aa). Basic residues predominate over residues 213-222; that stretch reads KKKKKKKGRI. K231 is covalently cross-linked (Glycyl lysine isopeptide (Lys-Gly) (interchain with G-Cter in SUMO2)). T251 is modified (phosphothreonine). Residues S253 and S256 each carry the phosphoserine modification. Residue T260 is modified to Phosphothreonine. The span at 286 to 295 shows a compositional bias: basic and acidic residues; the sequence is RAGKRERCSA. S294 and S334 each carry phosphoserine. T335 carries the post-translational modification Phosphothreonine. The span at 340 to 349 shows a compositional bias: basic and acidic residues; that stretch reads ETDRKGDSLS. Phosphoserine is present on S347. The span at 350–363 shows a compositional bias: basic residues; it reads KVKRKHKKKHKERH. K406 is covalently cross-linked (Glycyl lysine isopeptide (Lys-Gly) (interchain with G-Cter in SUMO2)). Positions 438 to 551 constitute a xRRM domain; that stretch reads QFVTGVIVKI…TEKLITKAEK (114 aa).

Belongs to the LARP7 family. Core component of the 7SK RNP complex, at least composed of 7SK RNA, LARP7, MEPCE, HEXIM1 (or HEXIM2) and P-TEFb (composed of CDK9 and CCNT1/cyclin-T1). Interacts with METTL16. Interacts with RBM7; upon genotoxic stress this interaction is enhanced, triggering the release of inactive P-TEFb complex from the core, yielding to P-TEFb complex activation. Associates with box C/D small nucleolar ribonucleoprotein (snoRNP) complexes.

Its subcellular location is the nucleus. It localises to the nucleoplasm. In terms of biological role, RNA-binding protein that specifically binds distinct small nuclear RNA (snRNAs) and regulates their processing and function. Specifically binds the 7SK snRNA (7SK RNA) and acts as a core component of the 7SK ribonucleoprotein (RNP) complex, thereby acting as a negative regulator of transcription elongation by RNA polymerase II. The 7SK RNP complex sequesters the positive transcription elongation factor b (P-TEFb) in a large inactive 7SK RNP complex preventing RNA polymerase II phosphorylation and subsequent transcriptional elongation. The 7SK RNP complex also promotes snRNA gene transcription by RNA polymerase II via interaction with the little elongation complex (LEC). LARP7 specifically binds to the highly conserved 3'-terminal U-rich stretch of 7SK RNA; on stimulation, remains associated with 7SK RNA, whereas P-TEFb is released from the complex. LARP7 also acts as a regulator of mRNA splicing fidelity by promoting U6 snRNA processing. Specifically binds U6 snRNAs and associates with a subset of box C/D RNP complexes: promotes U6 snRNA 2'-O-methylation by facilitating U6 snRNA loading into box C/D RNP complexes. U6 snRNA 2'-O-methylation is required for mRNA splicing fidelity. Binds U6 snRNAs with a 5'-CAGGG-3' sequence motif. U6 snRNA processing is required for spermatogenesis. This is La-related protein 7 from Mus musculus (Mouse).